A 102-amino-acid chain; its full sequence is Small ribosomal subunit protein eS24 (102 aa).

This sequence belongs to the eukaryotic ribosomal protein eS24 family.

The chain is Small ribosomal subunit protein eS24 from Methanococcus aeolicus (strain ATCC BAA-1280 / DSM 17508 / OCM 812 / Nankai-3).